The following is a 146-amino-acid chain: Mite group 2 allergen Der p 2 (146 aa).

The N-terminal stretch at 1–17 (MMYKILCLSLLVAAVAR) is a signal peptide. 3 disulfide bridges follow: cysteine 25/cysteine 136, cysteine 38/cysteine 44, and cysteine 90/cysteine 95.

The protein belongs to the NPC2 family.

It localises to the secreted. The protein is Mite group 2 allergen Der p 2 (DERP2) of Dermatophagoides pteronyssinus (European house dust mite).